Reading from the N-terminus, the 483-residue chain is Phosphomethylpyrimidine synthase (483 aa).

Substrate is bound by residues Asn97, Met126, Tyr156, His192, 212-214, 253-256, and Glu292; these read SRG and DSLR. His296 serves as a coordination point for Zn(2+). Tyr319 lines the substrate pocket. His360 serves as a coordination point for Zn(2+). Cys440, Cys443, and Cys448 together coordinate [4Fe-4S] cluster.

It belongs to the ThiC family. [4Fe-4S] cluster serves as cofactor.

The catalysed reaction is 5-amino-1-(5-phospho-beta-D-ribosyl)imidazole + S-adenosyl-L-methionine = 4-amino-2-methyl-5-(phosphooxymethyl)pyrimidine + CO + 5'-deoxyadenosine + formate + L-methionine + 3 H(+). It functions in the pathway cofactor biosynthesis; thiamine diphosphate biosynthesis. Its function is as follows. Catalyzes the synthesis of the hydroxymethylpyrimidine phosphate (HMP-P) moiety of thiamine from aminoimidazole ribotide (AIR) in a radical S-adenosyl-L-methionine (SAM)-dependent reaction. The polypeptide is Phosphomethylpyrimidine synthase (Parasynechococcus marenigrum (strain WH8102)).